The following is a 68-amino-acid chain: Small ribosomal subunit protein bS21 (68 aa).

This sequence belongs to the bacterial ribosomal protein bS21 family.

The chain is Small ribosomal subunit protein bS21 from Ruegeria sp. (strain TM1040) (Silicibacter sp.).